The chain runs to 344 residues: Dihydroorotase (344 aa).

Zn(2+) is bound by residues His-14 and His-16. Substrate contacts are provided by residues 16-18 and Asn-42; that span reads HLR. The Zn(2+) site is built by Lys-100, His-137, and His-175. Lys-100 bears the N6-carboxylysine mark. A substrate-binding site is contributed by His-137. Position 220 (Leu-220) interacts with substrate. A Zn(2+)-binding site is contributed by Asp-248. Asp-248 is a catalytic residue. 2 residues coordinate substrate: His-252 and Ala-264.

It belongs to the metallo-dependent hydrolases superfamily. DHOase family. Class II DHOase subfamily. As to quaternary structure, homodimer. It depends on Zn(2+) as a cofactor.

The enzyme catalyses (S)-dihydroorotate + H2O = N-carbamoyl-L-aspartate + H(+). It participates in pyrimidine metabolism; UMP biosynthesis via de novo pathway; (S)-dihydroorotate from bicarbonate: step 3/3. Functionally, catalyzes the reversible cyclization of carbamoyl aspartate to dihydroorotate. The polypeptide is Dihydroorotase (Cupriavidus pinatubonensis (strain JMP 134 / LMG 1197) (Cupriavidus necator (strain JMP 134))).